The following is a 411-amino-acid chain: LL-diaminopimelate aminotransferase (411 aa).

The substrate site is built by tyrosine 15 and glycine 42. Residues tyrosine 72, 108 to 109 (SK), tyrosine 132, asparagine 187, tyrosine 218, and 246 to 248 (SFS) contribute to the pyridoxal 5'-phosphate site. Substrate-binding residues include lysine 109, tyrosine 132, and asparagine 187. Residue lysine 249 is modified to N6-(pyridoxal phosphate)lysine. Pyridoxal 5'-phosphate-binding residues include arginine 257 and asparagine 292. Asparagine 292 and arginine 388 together coordinate substrate.

This sequence belongs to the class-I pyridoxal-phosphate-dependent aminotransferase family. LL-diaminopimelate aminotransferase subfamily. Homodimer. Pyridoxal 5'-phosphate serves as cofactor.

The enzyme catalyses (2S,6S)-2,6-diaminopimelate + 2-oxoglutarate = (S)-2,3,4,5-tetrahydrodipicolinate + L-glutamate + H2O + H(+). The protein operates within amino-acid biosynthesis; L-lysine biosynthesis via DAP pathway; LL-2,6-diaminopimelate from (S)-tetrahydrodipicolinate (aminotransferase route): step 1/1. Functionally, involved in the synthesis of meso-diaminopimelate (m-DAP or DL-DAP), required for both lysine and peptidoglycan biosynthesis. Catalyzes the direct conversion of tetrahydrodipicolinate to LL-diaminopimelate. This Geobacter sp. (strain M21) protein is LL-diaminopimelate aminotransferase.